Consider the following 530-residue polypeptide: Inactive ubiquitin carboxyl-terminal hydrolase 17-like protein 4 (530 aa).

The USP domain maps to 80 to 375 (AGLQNMGNTC…QAYVLFYIQK (296 aa)). A compositionally biased stretch (basic and acidic residues) spans 382–392 (SESVSRGREPR). Disordered stretches follow at residues 382 to 410 (SESV…ELKR) and 493 to 530 (NSTD…LVCQ). Over residues 495 to 510 (TDQESMNTGTLASLQG) the composition is skewed to polar residues. Over residues 511-524 (RTRRSKGKNKHSKR) the composition is skewed to basic residues.

Belongs to the peptidase C19 family. USP17 subfamily.

The protein resides in the nucleus. It is found in the endoplasmic reticulum. In Homo sapiens (Human), this protein is Inactive ubiquitin carboxyl-terminal hydrolase 17-like protein 4 (USP17L4).